We begin with the raw amino-acid sequence, 202 residues long: Ribosome maturation factor RimM (202 aa).

In terms of domain architecture, PRC barrel spans 121-202 (ADEYYWVDLI…CITVDWQPDY (82 aa)).

This sequence belongs to the RimM family. As to quaternary structure, binds ribosomal protein uS19.

Its subcellular location is the cytoplasm. An accessory protein needed during the final step in the assembly of 30S ribosomal subunit, possibly for assembly of the head region. Essential for efficient processing of 16S rRNA. May be needed both before and after RbfA during the maturation of 16S rRNA. It has affinity for free ribosomal 30S subunits but not for 70S ribosomes. The sequence is that of Ribosome maturation factor RimM from Polaromonas naphthalenivorans (strain CJ2).